The primary structure comprises 406 residues: Eukaryotic initiation factor 4A-I (406 aa).

Residues methionine 1 to glycine 21 form a disordered region. Serine 2 bears the N-acetylserine mark. A Phosphoserine modification is found at serine 4. The short motif at aspartate 32–glutamine 60 is the Q motif element. The Helicase ATP-binding domain occupies isoleucine 63–isoleucine 234. Position 76–83 (alanine 76–threonine 83) interacts with ATP. At lysine 118 the chain carries N6-acetyllysine. Lysine 146 is covalently cross-linked (Glycyl lysine isopeptide (Lys-Gly) (interchain with G-Cter in SUMO2)). A Phosphothreonine modification is found at threonine 158. Position 174 is an N6-acetyllysine (lysine 174). Residues aspartate 182–aspartate 185 carry the DEAD box motif. An N6-acetyllysine modification is found at lysine 193. Lysine 225 participates in a covalent cross-link: Glycyl lysine isopeptide (Lys-Gly) (interchain with G-Cter in SUMO2). Lysine 238 is modified (N6-acetyllysine; alternate). Lysine 238 is covalently cross-linked (Glycyl lysine isopeptide (Lys-Gly) (interchain with G-Cter in SUMO2); alternate). One can recognise a Helicase C-terminal domain in the interval glycine 245–isoleucine 406. Residues lysine 309, lysine 369, and lysine 381 each participate in a glycyl lysine isopeptide (Lys-Gly) (interchain with G-Cter in SUMO2) cross-link.

This sequence belongs to the DEAD box helicase family. eIF4A subfamily. EIF4F is a multi-subunit complex, the composition of which varies with external and internal environmental conditions. It is composed of at least EIF4A, EIF4E and EIF4G1/EIF4G3. Interacts with PAIP1, EIF4E and UPF2. Found in a complex with XPO7, EIF4A1, ARHGAP1, VPS26A, VPS29, VPS35 and SFN. May interact with NOM1. Interacts with PDCD4; this interferes with the interaction between EIF4A and EIF4G. Interacts with RBM4. Interacts with DDX3X in an RNA-independent manner. Interacts with PKP1 (via N-terminus); the interaction promotes EIF4A1 recruitment to the cap-dependent translation complex and EIF4A1 ATPase activity.

The protein resides in the cytoplasm. The protein localises to the perinuclear region. Its subcellular location is the cell membrane. It localises to the stress granule. The catalysed reaction is ATP + H2O = ADP + phosphate + H(+). In terms of biological role, ATP-dependent RNA helicase which is a subunit of the eIF4F complex involved in cap recognition and is required for mRNA binding to ribosome. In the current model of translation initiation, eIF4A unwinds RNA secondary structures in the 5'-UTR of mRNAs which is necessary to allow efficient binding of the small ribosomal subunit, and subsequent scanning for the initiator codon. As a result, promotes cell proliferation and growth. The chain is Eukaryotic initiation factor 4A-I (EIF4A1) from Bos taurus (Bovine).